Consider the following 309-residue polypeptide: N(5)-(carboxyethyl)ornithine synthase (309 aa).

3 residues coordinate pyruvate: Arg-15, Lys-71, and His-92. NADP(+) is bound at residue 171 to 176 (GSGNVA).

This sequence belongs to the AlaDH/PNT family. CEOS subfamily. Homotetramer.

The catalysed reaction is N(5)-[1(S)-1-carboxyethyl]-L-ornithine + NADP(+) + H2O = L-ornithine + pyruvate + NADPH + H(+). Catalyzes the NADPH-dependent reductive condensation between pyruvic acid and the side chain amino group of L-ornithine to form N(5)-(L-1-carboxyethyl)-L-ornithine. To a lesser extent, can also use L-lysine as substrate (yielding N(6)-(L-1-carboxyethyl)-L-lysine). This is N(5)-(carboxyethyl)ornithine synthase (ceo) from Lactococcus lactis subsp. lactis (strain IL1403) (Streptococcus lactis).